We begin with the raw amino-acid sequence, 397 residues long: Tryptophan synthase beta chain (397 aa).

Lys-86 bears the N6-(pyridoxal phosphate)lysine mark.

This sequence belongs to the TrpB family. As to quaternary structure, tetramer of two alpha and two beta chains. Pyridoxal 5'-phosphate serves as cofactor.

It catalyses the reaction (1S,2R)-1-C-(indol-3-yl)glycerol 3-phosphate + L-serine = D-glyceraldehyde 3-phosphate + L-tryptophan + H2O. Its pathway is amino-acid biosynthesis; L-tryptophan biosynthesis; L-tryptophan from chorismate: step 5/5. Its function is as follows. The beta subunit is responsible for the synthesis of L-tryptophan from indole and L-serine. This Aeromonas salmonicida (strain A449) protein is Tryptophan synthase beta chain.